Here is a 271-residue protein sequence, read N- to C-terminus: MATEHNVQLVPGSQKIPKGVVSPRSAAEGPALTRRRSKKESWHPGSQKASSGDQSSSQGSEASGSSKHPPRTKVGQEEPSSAPARPASHRHSHRHRSDPQQDAAQRTYGPLLNRMFGKDRELGPEELEELQAAFEEFDTDQDGYIGYRELGDCMRTLGYMPTEMELLEVSQHVKMRMGGFVDFEEFVELISPKLREETAHMLGVRELRIAFREFDKDRDGRITVAELRQAAPALLGEPLEGTELDEMLREMDLNGDGTIDFDEFVMMLSTG.

A disordered region spans residues 1 to 105 (MATEHNVQLV…RSDPQQDAAQ (105 aa)). A Phosphoserine; by PKC/PRKCZ modification is found at Ser37. Residues 45-67 (GSQKASSGDQSSSQGSEASGSSK) show a composition bias toward low complexity. Over residues 87 to 96 (ASHRHSHRHR) the composition is skewed to basic residues. EF-hand domains follow at residues 125-160 (EELEELQAAFEEFDTDQDGYIGYRELGDCMRTLGYM), 179-196 (GFVDFEEFVELISPKLRE), 202-237 (LGVRELRIAFREFDKDRDGRITVAELRQAAPALLGE), and 239-271 (LEGTELDEMLREMDLNGDGTIDFDEFVMMLSTG). Residues Asp138, Asp140, Asp142, Tyr144, and Glu149 each coordinate Ca(2+). Ca(2+)-binding residues include Asp215, Asp217, Asp219, Arg221, Glu226, Asp252, Asn254, Asp256, Thr258, and Glu263.

As to quaternary structure, interacts with CACNA1F and CACNA1D (via IQ domain) in a calcium independent manner. Interacts (via N-terminus) with UNC119. In terms of processing, phosphorylated. Phosphorylation levels change with the light conditions and regulate the activity, but has no effect on calcium binding. As to expression, expressed in retina and in the inner hair cells (IHC) of the cochlea.

The protein localises to the cytoplasm. The protein resides in the presynapse. In terms of biological role, involved in normal synaptic function through regulation of Ca(2+) influx and neurotransmitter release in photoreceptor synaptic terminals and in auditory transmission. Modulator of CACNA1D and CACNA1F, suppressing the calcium-dependent inactivation and shifting the activation range to more hyperpolarized voltages. This is Calcium-binding protein 4 (Cabp4) from Mus musculus (Mouse).